The following is a 359-amino-acid chain: UDP-N-acetylglucosamine--N-acetylmuramyl-(pentapeptide) pyrophosphoryl-undecaprenol N-acetylglucosamine transferase (359 aa).

UDP-N-acetyl-alpha-D-glucosamine contacts are provided by residues 15–17, Asn-127, Arg-166, Ser-191, Ile-245, 264–269, and Gln-290; these read TGG and ALTVSE.

It belongs to the glycosyltransferase 28 family. MurG subfamily.

It is found in the cell inner membrane. It catalyses the reaction di-trans,octa-cis-undecaprenyl diphospho-N-acetyl-alpha-D-muramoyl-L-alanyl-D-glutamyl-meso-2,6-diaminopimeloyl-D-alanyl-D-alanine + UDP-N-acetyl-alpha-D-glucosamine = di-trans,octa-cis-undecaprenyl diphospho-[N-acetyl-alpha-D-glucosaminyl-(1-&gt;4)]-N-acetyl-alpha-D-muramoyl-L-alanyl-D-glutamyl-meso-2,6-diaminopimeloyl-D-alanyl-D-alanine + UDP + H(+). Its pathway is cell wall biogenesis; peptidoglycan biosynthesis. In terms of biological role, cell wall formation. Catalyzes the transfer of a GlcNAc subunit on undecaprenyl-pyrophosphoryl-MurNAc-pentapeptide (lipid intermediate I) to form undecaprenyl-pyrophosphoryl-MurNAc-(pentapeptide)GlcNAc (lipid intermediate II). The sequence is that of UDP-N-acetylglucosamine--N-acetylmuramyl-(pentapeptide) pyrophosphoryl-undecaprenol N-acetylglucosamine transferase from Pseudomonas putida (strain W619).